Consider the following 996-residue polypeptide: Alanine--tRNA ligase, chloroplastic/mitochondrial (996 aa).

Positions 677, 681, 779, and 783 each coordinate Zn(2+).

The protein belongs to the class-II aminoacyl-tRNA synthetase family. As to quaternary structure, monomer. The cofactor is Zn(2+).

It is found in the plastid. The protein localises to the chloroplast. Its subcellular location is the mitochondrion. The enzyme catalyses tRNA(Ala) + L-alanine + ATP = L-alanyl-tRNA(Ala) + AMP + diphosphate. In terms of biological role, catalyzes the attachment of alanine to tRNA(Ala) in a two-step reaction: alanine is first activated by ATP to form Ala-AMP and then transferred to the acceptor end of tRNA(Ala). Also edits incorrectly charged tRNA(Ala) via its editing domain. In Oryza sativa subsp. indica (Rice), this protein is Alanine--tRNA ligase, chloroplastic/mitochondrial.